Consider the following 233-residue polypeptide: Ribosomal RNA small subunit methyltransferase G (233 aa).

A disordered region spans residues 1–25 (MASRQSPMAVSQPDHADRSAALQLT). S-adenosyl-L-methionine contacts are provided by Gly-85, Phe-90, and Arg-155.

The protein belongs to the methyltransferase superfamily. RNA methyltransferase RsmG family.

The protein resides in the cytoplasm. It carries out the reaction guanosine(527) in 16S rRNA + S-adenosyl-L-methionine = N(7)-methylguanosine(527) in 16S rRNA + S-adenosyl-L-homocysteine. In terms of biological role, specifically methylates the N7 position of guanine in position 527 of 16S rRNA. The polypeptide is Ribosomal RNA small subunit methyltransferase G (Rhodopseudomonas palustris (strain BisB5)).